The sequence spans 315 residues: Calcium homeostasis modulator protein 4 (315 aa).

Topologically, residues 1-14 (MSPDLNCISSSLLR) are cytoplasmic. The helical transmembrane segment at 15–37 (SEPCINSLIAILTVCGQQLFSSY) threads the bilayer. Over 38–48 (TFSCPCQVGKN) the chain is Extracellular. Disulfide bonds link cysteine 41/cysteine 132 and cysteine 43/cysteine 163. Residues 49–71 (FYYGSAFLVVPALILLIAGYALR) traverse the membrane as a helical segment. Topologically, residues 72 to 104 (GQMWTVASEYCCCSCTPPYRRSSPLERRLACLM) are cytoplasmic. A helical membrane pass occupies residues 105-130 (FFDITGRALVAPLTWLTVTLLTGTYY). Residues 131–184 (ECAASEFASVDQYPMFANVTPSKREEMLAGFPCYTSAPSDVIPIRDEVALLHRY) lie on the Extracellular side of the membrane. Residues 185–208 (QSQMLGWILVVLATIALLLSKCLA) traverse the membrane as a helical segment. The Cytoplasmic portion of the chain corresponds to 209-315 (RCCSPLTSLQ…DRQEGIEMKP (107 aa)).

This sequence belongs to the CALHM family. In terms of assembly, oligomerizes to form decameric and undecameric channels. Two hemichannels can assemble in a tail-to-tail manner to form a gap junction.

Its subcellular location is the cell membrane. Functionally, may assemble to form gap junction channel-like structures involved in intercellular communication. Channel gating and ion conductance are likely regulated by membrane lipids rather than by membrane depolarization or extracellular calcium levels. The polypeptide is Calcium homeostasis modulator protein 4 (Mus musculus (Mouse)).